A 435-amino-acid chain; its full sequence is Serine--tRNA ligase (435 aa).

239-241 contacts L-serine; sequence TAE. Residue 270–272 coordinates ATP; the sequence is RAE. Glutamate 293 provides a ligand contact to L-serine. 357-360 is a binding site for ATP; sequence EISS. Serine 393 contacts L-serine.

The protein belongs to the class-II aminoacyl-tRNA synthetase family. Type-1 seryl-tRNA synthetase subfamily. In terms of assembly, homodimer. The tRNA molecule binds across the dimer.

Its subcellular location is the cytoplasm. It catalyses the reaction tRNA(Ser) + L-serine + ATP = L-seryl-tRNA(Ser) + AMP + diphosphate + H(+). The enzyme catalyses tRNA(Sec) + L-serine + ATP = L-seryl-tRNA(Sec) + AMP + diphosphate + H(+). It participates in aminoacyl-tRNA biosynthesis; selenocysteinyl-tRNA(Sec) biosynthesis; L-seryl-tRNA(Sec) from L-serine and tRNA(Sec): step 1/1. Catalyzes the attachment of serine to tRNA(Ser). Is also able to aminoacylate tRNA(Sec) with serine, to form the misacylated tRNA L-seryl-tRNA(Sec), which will be further converted into selenocysteinyl-tRNA(Sec). The polypeptide is Serine--tRNA ligase (Parvibaculum lavamentivorans (strain DS-1 / DSM 13023 / NCIMB 13966)).